Here is a 436-residue protein sequence, read N- to C-terminus: Transcriptional regulator STP3 (436 aa).

Residues 204-277 (EPLDDEFVPP…TKRKYTKKKQ (74 aa)) are disordered. Positions 230 to 265 (ISPPASSDSSSSSSYVPQLIPSSSSSVTSNGDSPVS) are enriched in low complexity. Residues 268–277 (TKRKYTKKKQ) show a composition bias toward basic residues. Residues 315-337 (FDCPSCDASFKVKGYLTRHLKKH) form a C2H2-type zinc finger.

Activated by the amino acid-induced proteolytic removal of an N-terminal inhibitory domain.

It is found in the cell membrane. It localises to the nucleus. Transcription factor that activates genes required for degradation of extracellular protein and uptake of peptides such as the secreted aspartyl protease SAP2 or the oligopeptide transporter OPT1. Required for virulence. Synthesized as latent cytoplasmic precursor, which, upon a signal initiated by the plasma membrane SPS amino acid sensor system (including CSY1 and CSH3), becomes proteolytically activated and relocates to the nucleus, where it induces the expression of SPS-sensor-regulated genes. In Candida albicans (strain SC5314 / ATCC MYA-2876) (Yeast), this protein is Transcriptional regulator STP3 (STP3).